The chain runs to 90 residues: U7-theraphotoxin-Hhn1i (90 aa).

A signal peptide spans 1–19; sequence MKTAIFTVVLALAVFAVLS. A propeptide spanning residues 20-50 is cleaved from the precursor; sequence FGWEANEKALSEEFTELIHEKEAASETEARE. 3 disulfides stabilise this stretch: cysteine 51/cysteine 65, cysteine 58/cysteine 70, and cysteine 64/cysteine 81.

Belongs to the neurotoxin 10 (Hwtx-1) family. 13 (Hntx-13) subfamily. As to expression, expressed by the venom gland.

Its subcellular location is the secreted. Ion channel inhibitor. In Cyriopagopus hainanus (Chinese bird spider), this protein is U7-theraphotoxin-Hhn1i.